The following is a 338-amino-acid chain: Trace amine-associated receptor 9 (338 aa).

Residues 1–23 (MELCYENVNGSCIKSSYSPWPRA) lie on the Extracellular side of the membrane. A glycan (N-linked (GlcNAc...) asparagine) is linked at N9. 2 cysteine pairs are disulfide-bonded: C12/C176 and C95/C180. A helical membrane pass occupies residues 24–48 (ILYAVLGLGALLAVFGNLLVITAIL). Residues 49–58 (HFKQLHTPTN) are Cytoplasmic-facing. A helical membrane pass occupies residues 59–80 (FLVASLACADFLVGVTVMPFST). The Extracellular portion of the chain corresponds to 81-95 (VRSVEGCWYFGDTYC). A helical membrane pass occupies residues 96–118 (KFHTCFDTSFCFASLFHLCCISI). The spermidine site is built by D102 and T103. Residues 119–138 (DRYVAVTDPLTYPTKFTISV) lie on the Cytoplasmic side of the membrane. Residues 139 to 160 (SGVCIALSWFFSVTYSFSIFYT) form a helical membrane-spanning segment. Residues 161-186 (GANEEGIEELVVALTCVGGCQAPLNQ) are Extracellular-facing. An extracellular Loop 2 (ECL2) region spans residues 164-177 (EEGIEELVVALTCV). A helical membrane pass occupies residues 187 to 208 (NWVLLCFLLFFLPTVVMVFLYG). The Cytoplasmic segment spans residues 209 to 246 (RIFLVAKQQARKIEGSANQPQASSESYKERVARRERKA). The helical transmembrane segment at 247 to 270 (AKTLGIAMAAFLVSWLPYIIDAVI) threads the bilayer. At 271–283 (DAYMNFITPAYVY) the chain is on the extracellular side. The chain crosses the membrane as a helical span at residues 284–304 (EILVWCVYYNSAMNPLIYAFF). At 305 to 338 (YPWFRKAIKLIVSGKVFRADSSRTNLFSEEAGAG) the chain is on the cytoplasmic side.

It belongs to the G-protein coupled receptor 1 family. Mainly expressed in neurons of the olfactory epithelium. Also expressed in the intestine.

Its subcellular location is the cell membrane. Olfactory receptor specific for trace amines, such as triethylamine, N-methylpiperidine, N,N-dimethylcyclohexylamine (DMCHA), beta-phenylethylamine (beta-PEA), cadaverine (CAD) and polyamines such as spermidine. Trace amine compounds are enriched in animal body fluids and act on trace amine-associated receptors (TAARs) to elicit both intraspecific and interspecific innate behaviors. Trace amine-binding causes a conformation change that triggers signaling via G(s)-class of G alpha proteins (GNAL or GNAS). In mature olfactory sensory neurons, Taar9 is coupled with GNAL/G(olf)G alpha protein and mediates activation of adenylate cyclase activity to activate cAMP signaling and eventually transmit odorant signals to achieve membrane depolarization. In immature olfactory sensory neurons, Taar9 is coupled with GNAS/G(s) G alpha proteins. The sequence is that of Trace amine-associated receptor 9 from Rattus norvegicus (Rat).